Here is a 194-residue protein sequence, read N- to C-terminus: MNVNNVEMVMSAVSAAQYPTDGKPEIALVGRSNVGKSSLTNTLIQRKNFARTSSQPGKTQTLNFYDVENQLYFVDVPGYGYAKVSKKQREAFGNMIEEYITSRKQLRGVISLVDARHDPSEDDVAMYEWLHYYNIPILVVATKSDKISKSKFNKYENNIKKQLGFDSSASDFLFFSSETKYGRDSVWEWITAHM.

Residues 22 to 194 (GKPEIALVGR…SVWEWITAHM (173 aa)) form the EngB-type G domain. GTP is bound by residues 30-37 (GRSNVGKS), 57-61 (GKTQT), 75-78 (DVPG), 142-145 (TKSD), and 175-177 (FSS). S37 and T59 together coordinate Mg(2+).

This sequence belongs to the TRAFAC class TrmE-Era-EngA-EngB-Septin-like GTPase superfamily. EngB GTPase family. Requires Mg(2+) as cofactor.

In terms of biological role, necessary for normal cell division and for the maintenance of normal septation. The chain is Probable GTP-binding protein EngB from Leuconostoc citreum (strain KM20).